The sequence spans 337 residues: Holliday junction branch migration complex subunit RuvB (337 aa).

The segment at 4-185 is large ATPase domain (RuvB-L); it reads ADRLISNSFE…FGITQRLEYY (182 aa). ATP contacts are provided by residues I24, R25, G66, K69, T70, T71, 132–134, R175, Y185, and R222; that span reads EDY. Residue T70 participates in Mg(2+) binding. The small ATPAse domain (RuvB-S) stretch occupies residues 186–256; it reads KVDDLKDIVQ…TAKKALDMLD (71 aa). The tract at residues 259 to 337 is head domain (RuvB-H); the sequence is SSGFDYMDRK…HFGLDIPEAR (79 aa). DNA-binding residues include R314 and R319.

This sequence belongs to the RuvB family. Homohexamer. Forms an RuvA(8)-RuvB(12)-Holliday junction (HJ) complex. HJ DNA is sandwiched between 2 RuvA tetramers; dsDNA enters through RuvA and exits via RuvB. An RuvB hexamer assembles on each DNA strand where it exits the tetramer. Each RuvB hexamer is contacted by two RuvA subunits (via domain III) on 2 adjacent RuvB subunits; this complex drives branch migration. In the full resolvosome a probable DNA-RuvA(4)-RuvB(12)-RuvC(2) complex forms which resolves the HJ.

It is found in the cytoplasm. It catalyses the reaction ATP + H2O = ADP + phosphate + H(+). Its function is as follows. The RuvA-RuvB-RuvC complex processes Holliday junction (HJ) DNA during genetic recombination and DNA repair, while the RuvA-RuvB complex plays an important role in the rescue of blocked DNA replication forks via replication fork reversal (RFR). RuvA specifically binds to HJ cruciform DNA, conferring on it an open structure. The RuvB hexamer acts as an ATP-dependent pump, pulling dsDNA into and through the RuvAB complex. RuvB forms 2 homohexamers on either side of HJ DNA bound by 1 or 2 RuvA tetramers; 4 subunits per hexamer contact DNA at a time. Coordinated motions by a converter formed by DNA-disengaged RuvB subunits stimulates ATP hydrolysis and nucleotide exchange. Immobilization of the converter enables RuvB to convert the ATP-contained energy into a lever motion, pulling 2 nucleotides of DNA out of the RuvA tetramer per ATP hydrolyzed, thus driving DNA branch migration. The RuvB motors rotate together with the DNA substrate, which together with the progressing nucleotide cycle form the mechanistic basis for DNA recombination by continuous HJ branch migration. Branch migration allows RuvC to scan DNA until it finds its consensus sequence, where it cleaves and resolves cruciform DNA. This Photobacterium profundum (strain SS9) protein is Holliday junction branch migration complex subunit RuvB.